Here is a 109-residue protein sequence, read N- to C-terminus: Large ribosomal subunit protein uL22 (109 aa).

Residues 84–95 show a composition bias toward basic residues; sequence ARGTASRIRKPT. The segment at 84–109 is disordered; sequence ARGTASRIRKPTSHIMVEVSKPSKEA.

The protein belongs to the universal ribosomal protein uL22 family. In terms of assembly, part of the 50S ribosomal subunit.

In terms of biological role, this protein binds specifically to 23S rRNA; its binding is stimulated by other ribosomal proteins, e.g. L4, L17, and L20. It is important during the early stages of 50S assembly. It makes multiple contacts with different domains of the 23S rRNA in the assembled 50S subunit and ribosome. Its function is as follows. The globular domain of the protein is located near the polypeptide exit tunnel on the outside of the subunit, while an extended beta-hairpin is found that lines the wall of the exit tunnel in the center of the 70S ribosome. The polypeptide is Large ribosomal subunit protein uL22 (Campylobacter hominis (strain ATCC BAA-381 / DSM 21671 / CCUG 45161 / LMG 19568 / NCTC 13146 / CH001A)).